Consider the following 81-residue polypeptide: Acyl carrier protein (81 aa).

One can recognise a Carrier domain in the interval 4 to 79 (QEIFEKVQTI…QAVDFISQKV (76 aa)). Position 39 is an O-(pantetheine 4'-phosphoryl)serine (Ser-39).

It belongs to the acyl carrier protein (ACP) family. 4'-phosphopantetheine is transferred from CoA to a specific serine of apo-ACP by AcpS. This modification is essential for activity because fatty acids are bound in thioester linkage to the sulfhydryl of the prosthetic group.

Its subcellular location is the plastid. It is found in the chloroplast. Its pathway is lipid metabolism; fatty acid biosynthesis. Functionally, carrier of the growing fatty acid chain in fatty acid biosynthesis. This chain is Acyl carrier protein, found in Guillardia theta (Cryptophyte).